The sequence spans 556 residues: Glucose-6-phosphate isomerase (556 aa).

Catalysis depends on Glu360, which acts as the Proton donor. Catalysis depends on residues His391 and Lys519.

This sequence belongs to the GPI family.

The protein resides in the cytoplasm. The catalysed reaction is alpha-D-glucose 6-phosphate = beta-D-fructose 6-phosphate. The protein operates within carbohydrate biosynthesis; gluconeogenesis. It participates in carbohydrate degradation; glycolysis; D-glyceraldehyde 3-phosphate and glycerone phosphate from D-glucose: step 2/4. Functionally, catalyzes the reversible isomerization of glucose-6-phosphate to fructose-6-phosphate. The polypeptide is Glucose-6-phosphate isomerase (Acinetobacter baumannii (strain AB0057)).